Here is a 350-residue protein sequence, read N- to C-terminus: Ion-translocating oxidoreductase complex subunit D (350 aa).

Transmembrane regions (helical) follow at residues 15-35, 36-56, 67-87, 88-108, and 122-142; these read QTQTLMLLVILACLPGLLAQT, WFFGWGSFIQILLALVTALGA, PIKPALMDGSAALTAVLIGLS, LPPLLPWWMLVLGTAFAIIIA, and PAMVAYVLLLVSFPVQMTSWL. Threonine 186 carries the post-translational modification FMN phosphoryl threonine. The next 4 helical transmembrane spans lie at 213–233, 242–262, 264–284, and 299–316; these read WGGIGWSWVNLGYLLGGLFLL, IPGAILGSLLLAATLGYLMTP, ATATPMFHLFSGATMLGAFFI, and LVYGVLIGVLVYLIRRFG.

The protein belongs to the NqrB/RnfD family. As to quaternary structure, the complex is composed of six subunits: RnfA, RnfB, RnfC, RnfD, RnfE and RnfG. Requires FMN as cofactor.

The protein resides in the cell inner membrane. Functionally, part of a membrane-bound complex that couples electron transfer with translocation of ions across the membrane. This Aeromonas salmonicida (strain A449) protein is Ion-translocating oxidoreductase complex subunit D.